Here is a 190-residue protein sequence, read N- to C-terminus: Imidazoleglycerol-phosphate dehydratase (190 aa).

This sequence belongs to the imidazoleglycerol-phosphate dehydratase family.

The protein resides in the cytoplasm. It carries out the reaction D-erythro-1-(imidazol-4-yl)glycerol 3-phosphate = 3-(imidazol-4-yl)-2-oxopropyl phosphate + H2O. Its pathway is amino-acid biosynthesis; L-histidine biosynthesis; L-histidine from 5-phospho-alpha-D-ribose 1-diphosphate: step 6/9. In Wolinella succinogenes (strain ATCC 29543 / DSM 1740 / CCUG 13145 / JCM 31913 / LMG 7466 / NCTC 11488 / FDC 602W) (Vibrio succinogenes), this protein is Imidazoleglycerol-phosphate dehydratase.